A 288-amino-acid chain; its full sequence is Elongation factor Ts (288 aa).

The tract at residues 79–82 is involved in Mg(2+) ion dislocation from EF-Tu; the sequence is TDFV.

It belongs to the EF-Ts family.

It is found in the cytoplasm. Associates with the EF-Tu.GDP complex and induces the exchange of GDP to GTP. It remains bound to the aminoacyl-tRNA.EF-Tu.GTP complex up to the GTP hydrolysis stage on the ribosome. The protein is Elongation factor Ts of Ehrlichia canis (strain Jake).